We begin with the raw amino-acid sequence, 210 residues long: Synaptosomal-associated protein 25 (210 aa).

The tract at residues 1-23 (MENSVENSMDPRSEQEEMQRCAD) is disordered. Residues 9 to 20 (MDPRSEQEEMQR) are compositionally biased toward basic and acidic residues. 2 t-SNARE coiled-coil homology domains span residues 23–85 (DQIT…LSDL) and 147–209 (DARE…ATKM).

The protein belongs to the SNAP-25 family.

It localises to the synapse. The protein localises to the synaptosome. The protein resides in the cell membrane. Functionally, may play an important role in the synaptic function of specific neuronal systems. Associates with proteins involved in vesicle docking and membrane fusion. This Torpedo marmorata (Marbled electric ray) protein is Synaptosomal-associated protein 25 (snap25).